We begin with the raw amino-acid sequence, 304 residues long: GTP cyclohydrolase FolE2 (304 aa).

The protein belongs to the GTP cyclohydrolase IV family.

The catalysed reaction is GTP + H2O = 7,8-dihydroneopterin 3'-triphosphate + formate + H(+). Its pathway is cofactor biosynthesis; 7,8-dihydroneopterin triphosphate biosynthesis; 7,8-dihydroneopterin triphosphate from GTP: step 1/1. Converts GTP to 7,8-dihydroneopterin triphosphate. This Bdellovibrio bacteriovorus (strain ATCC 15356 / DSM 50701 / NCIMB 9529 / HD100) protein is GTP cyclohydrolase FolE2.